Reading from the N-terminus, the 485-residue chain is Glutamyl-tRNA(Gln) amidotransferase subunit A (485 aa).

Active-site charge relay system residues include K79 and S154. S178 functions as the Acyl-ester intermediate in the catalytic mechanism.

This sequence belongs to the amidase family. GatA subfamily. In terms of assembly, heterotrimer of A, B and C subunits.

It carries out the reaction L-glutamyl-tRNA(Gln) + L-glutamine + ATP + H2O = L-glutaminyl-tRNA(Gln) + L-glutamate + ADP + phosphate + H(+). In terms of biological role, allows the formation of correctly charged Gln-tRNA(Gln) through the transamidation of misacylated Glu-tRNA(Gln) in organisms which lack glutaminyl-tRNA synthetase. The reaction takes place in the presence of glutamine and ATP through an activated gamma-phospho-Glu-tRNA(Gln). The protein is Glutamyl-tRNA(Gln) amidotransferase subunit A of Geobacillus thermodenitrificans (strain NG80-2).